Consider the following 298-residue polypeptide: Sulfofructose kinase (298 aa).

5 residues coordinate 6-deoxy-6-sulfo-D-fructose: D13, K27, G39, S95, and R138. ATP-binding residues include T212, G214, G217, and G243. 6-deoxy-6-sulfo-D-fructose is bound at residue D244.

This sequence belongs to the carbohydrate kinase PfkB family. In terms of assembly, homodimer.

The catalysed reaction is 6-deoxy-6-sulfo-D-fructose + ATP = 6-deoxy-6-sulfo-D-fructose 1-phosphate + ADP + H(+). Strongly inhibited by ADP. Activated by sulfoquinovose (SQ), sulfolactaldehyde (SLA) and dihydroxyacetone phosphate (DHAP) (through effects on KM) and by fructose 6-phosphate (F6P), fructose bisphosphate (FBP), phosphoenolpyruvate (PEP) and citrate (through effects on kcat/KM). In terms of biological role, phosphorylates 6-deoxy-6-sulfo-D-fructose (SF) to 6-deoxy-6-sulfo-D-fructose 1-phosphate (SFP). Cannot phosphorylate fructose 6-phosphate. The sequence is that of Sulfofructose kinase (yihV) from Escherichia coli (strain K12).